A 372-amino-acid polypeptide reads, in one-letter code: Virion morphogenesis protein OPG132 (372 aa).

This sequence belongs to the orthopoxvirus OPG132 family.

The protein localises to the host cytoplasm. The protein resides in the virion. In terms of biological role, lipid-bound viral membrane assembly protein that plays an essential role in immature virion (IV) to mature virion (MV) transition. Functions in both crescent-shaped viral membranes formation and its enclosure to form immature virions. In addition, participates in targeting mature virion proteins to sites of virion assembly to ensure their correct localization. This Homo sapiens (Human) protein is Virion morphogenesis protein OPG132 (OPG132).